Reading from the N-terminus, the 498-residue chain is ATP synthase subunit beta, chloroplastic (498 aa).

172–179 (GGAGVGKT) contacts ATP.

This sequence belongs to the ATPase alpha/beta chains family. F-type ATPases have 2 components, CF(1) - the catalytic core - and CF(0) - the membrane proton channel. CF(1) has five subunits: alpha(3), beta(3), gamma(1), delta(1), epsilon(1). CF(0) has four main subunits: a(1), b(1), b'(1) and c(9-12).

Its subcellular location is the plastid. The protein resides in the chloroplast thylakoid membrane. The enzyme catalyses ATP + H2O + 4 H(+)(in) = ADP + phosphate + 5 H(+)(out). Functionally, produces ATP from ADP in the presence of a proton gradient across the membrane. The catalytic sites are hosted primarily by the beta subunits. The polypeptide is ATP synthase subunit beta, chloroplastic (Chamaerops humilis (Mediterranean fan palm)).